Here is a 396-residue protein sequence, read N- to C-terminus: Enoyl-[acyl-carrier-protein] reductase [NADH] (396 aa).

NAD(+) is bound by residues 47–52, 73–74, 110–111, and 138–139; these read GASTGF, FE, DA, and LA. Residue Y224 coordinates substrate. Y234 functions as the Proton donor in the catalytic mechanism. NAD(+) is bound by residues K243 and 272–274; that span reads LVT.

This sequence belongs to the TER reductase family. Monomer.

The catalysed reaction is a 2,3-saturated acyl-[ACP] + NAD(+) = a (2E)-enoyl-[ACP] + NADH + H(+). Its pathway is lipid metabolism; fatty acid biosynthesis. Involved in the final reduction of the elongation cycle of fatty acid synthesis (FAS II). Catalyzes the reduction of a carbon-carbon double bond in an enoyl moiety that is covalently linked to an acyl carrier protein (ACP). This is Enoyl-[acyl-carrier-protein] reductase [NADH] from Flavobacterium johnsoniae (strain ATCC 17061 / DSM 2064 / JCM 8514 / BCRC 14874 / CCUG 350202 / NBRC 14942 / NCIMB 11054 / UW101) (Cytophaga johnsonae).